The sequence spans 242 residues: ATP synthase subunit a (242 aa).

Helical transmembrane passes span 29 to 49 (SAVA…TAFV), 84 to 104 (FFPL…LGMV), 114 to 134 (IIVT…YGIY), 140 to 160 (FFSL…MVII), 181 to 201 (VAGH…TWLF), and 206 to 226 (IALV…QAYI).

Belongs to the ATPase A chain family. As to quaternary structure, F-type ATPases have 2 components, CF(1) - the catalytic core - and CF(0) - the membrane proton channel. CF(1) has five subunits: alpha(3), beta(3), gamma(1), delta(1), epsilon(1). CF(0) has three main subunits: a(1), b(2) and c(9-12). The alpha and beta chains form an alternating ring which encloses part of the gamma chain. CF(1) is attached to CF(0) by a central stalk formed by the gamma and epsilon chains, while a peripheral stalk is formed by the delta and b chains.

Its subcellular location is the cell inner membrane. In terms of biological role, key component of the proton channel; it plays a direct role in the translocation of protons across the membrane. The polypeptide is ATP synthase subunit a (Orientia tsutsugamushi (strain Ikeda) (Rickettsia tsutsugamushi)).